A 194-amino-acid polypeptide reads, in one-letter code: Protein GrpE (194 aa).

The disordered stretch occupies residues 1 to 39 (MTNHEQDQQDNSELLDDDQVTLESQQAADSGAEAPASDD). Over residues 8-20 (QQDNSELLDDDQV) the composition is skewed to acidic residues.

This sequence belongs to the GrpE family. In terms of assembly, homodimer.

Its subcellular location is the cytoplasm. Participates actively in the response to hyperosmotic and heat shock by preventing the aggregation of stress-denatured proteins, in association with DnaK and GrpE. It is the nucleotide exchange factor for DnaK and may function as a thermosensor. Unfolded proteins bind initially to DnaJ; upon interaction with the DnaJ-bound protein, DnaK hydrolyzes its bound ATP, resulting in the formation of a stable complex. GrpE releases ADP from DnaK; ATP binding to DnaK triggers the release of the substrate protein, thus completing the reaction cycle. Several rounds of ATP-dependent interactions between DnaJ, DnaK and GrpE are required for fully efficient folding. The protein is Protein GrpE of Saccharophagus degradans (strain 2-40 / ATCC 43961 / DSM 17024).